The following is a 507-amino-acid chain: Cytochrome P450 52A7 (507 aa).

A helical transmembrane segment spans residues Leu-6–Ile-26. Cys-456 lines the heme pocket.

The protein belongs to the cytochrome P450 family. Requires heme as cofactor.

Its subcellular location is the membrane. Together with an NADPH cytochrome P450 the enzyme system catalyzes the terminal hydroxylation as the first step in the assimilation of alkanes and fatty acids. Preferentially hydroxylates lauric acid. This is Cytochrome P450 52A7 (CYP52A7) from Candida tropicalis (Yeast).